The chain runs to 219 residues: Glutathione S-transferase U19 (219 aa).

Residues 3 to 82 (NEVILLDFWP…YIDEVWSHKN (80 aa)) enclose the GST N-terminal domain. Residues 13 to 14 (SM), 39 to 40 (NK), 53 to 54 (KI), and 66 to 67 (ES) each bind glutathione. Positions 88-208 (DPYLRAQARF…LPDPEKVTEF (121 aa)) constitute a GST C-terminal domain. The residue at position 198 (Ser-198) is a Phosphoserine.

Belongs to the GST superfamily. Tau family.

It is found in the cytoplasm. Its subcellular location is the cytosol. The catalysed reaction is RX + glutathione = an S-substituted glutathione + a halide anion + H(+). In terms of biological role, catalyzes the glutathionylation of 12-oxophytodienoate (OPDA). In vitro, possesses glutathione S-transferase activity toward 1-chloro-2,4-dinitrobenzene (CDNB) and benzyl isothiocyanate (BITC), and glutathione peroxidase activity toward cumene hydroperoxide. This is Glutathione S-transferase U19 (GSTU19) from Arabidopsis thaliana (Mouse-ear cress).